Reading from the N-terminus, the 124-residue chain is Fluoride-specific ion channel FluC (124 aa).

4 helical membrane passes run 4–24, 35–55, 60–80, and 95–115; these read VLLV…ISIF, FGTL…YALG, ISPE…TTFS, and WLKA…MVYL. Residues Gly-74 and Thr-77 each coordinate Na(+).

It belongs to the fluoride channel Fluc/FEX (TC 1.A.43) family.

The protein localises to the cell inner membrane. The catalysed reaction is fluoride(in) = fluoride(out). With respect to regulation, na(+) is not transported, but it plays an essential structural role and its presence is essential for fluoride channel function. Fluoride-specific ion channel. Important for reducing fluoride concentration in the cell, thus reducing its toxicity. This is Fluoride-specific ion channel FluC from Shewanella putrefaciens (strain CN-32 / ATCC BAA-453).